The primary structure comprises 454 residues: CCA-adding enzyme (454 aa).

ATP-binding residues include serine 59 and arginine 62. Residues serine 59 and arginine 62 each coordinate CTP. Positions 71, 73, and 125 each coordinate Mg(2+). Residues histidine 148, lysine 167, and tyrosine 176 each contribute to the ATP site. Positions 148, 167, and 176 each coordinate CTP.

The protein belongs to the tRNA nucleotidyltransferase/poly(A) polymerase family. Archaeal CCA-adding enzyme subfamily. In terms of assembly, homodimer. Mg(2+) serves as cofactor.

The enzyme catalyses a tRNA precursor + 2 CTP + ATP = a tRNA with a 3' CCA end + 3 diphosphate. It catalyses the reaction a tRNA with a 3' CCA end + 2 CTP + ATP = a tRNA with a 3' CCACCA end + 3 diphosphate. Catalyzes the addition and repair of the essential 3'-terminal CCA sequence in tRNAs without using a nucleic acid template. Adds these three nucleotides in the order of C, C, and A to the tRNA nucleotide-73, using CTP and ATP as substrates and producing inorganic pyrophosphate. tRNA 3'-terminal CCA addition is required both for tRNA processing and repair. Also involved in tRNA surveillance by mediating tandem CCA addition to generate a CCACCA at the 3' terminus of unstable tRNAs. While stable tRNAs receive only 3'-terminal CCA, unstable tRNAs are marked with CCACCA and rapidly degraded. The chain is CCA-adding enzyme from Methanosarcina acetivorans (strain ATCC 35395 / DSM 2834 / JCM 12185 / C2A).